The primary structure comprises 515 residues: SWI/SNF-related matrix-associated actin-dependent regulator of chromatin subfamily D member 1 (515 aa).

Residues Met1–Pro103 are disordered. The segment covering Gly14–Gly23 has biased composition (gly residues). The interval Ala43–Asp167 is interaction with ESR1, NR1H4, NR3C1, PGR and SMARCA4. Asymmetric dimethylarginine is present on residues Arg68 and Arg88. Residue Lys101 forms a Glycyl lysine isopeptide (Lys-Gly) (interchain with G-Cter in SUMO2) linkage. The interval Ile168–Glu474 is interaction with SMARCC1 and SMARCC2. The tract at residues Arg180 to Thr515 is necessary for GR/NR3C1-mediated remodeling and transcription from chromatin; required for GR/NR3C1 interaction with the BRG1/SMARCA4 complex in vivo. Residue Thr203 is modified to Phosphothreonine. Lys223 bears the N6-acetyllysine mark. The 78-residue stretch at Tyr290 to Pro367 folds into the SWIB/MDM2 domain. The stretch at Ala412–Phe440 forms a coiled coil.

It belongs to the SMARCD family. Component of the multiprotein chromatin-remodeling complexes SWI/SNF: SWI/SNF-A (BAF), SWI/SNF-B (PBAF) and related complexes. The canonical complex contains a catalytic subunit (either SMARCA4/BRG1/BAF190A or SMARCA2/BRM/BAF190B), and at least SMARCE1, ACTL6A/BAF53, SMARCC1/BAF155, SMARCC2/BAF170, and SMARCB1/SNF5/BAF47. Other subunits specific to each of the complexes may also be present permitting several possible combinations developmentally and tissue specific. Component of the BAF complex, which includes at least actin (ACTB), ARID1A/BAF250A, ARID1B/BAF250B, SMARCA2/BRM, SMARCA4/BRG1/BAF190A, ACTL6A/BAF53, ACTL6B/BAF53B, SMARCE1/BAF57, SMARCC1/BAF155, SMARCC2/BAF170, SMARCB1/SNF5/INI1, and one or more SMARCD1/BAF60A, SMARCD2/BAF60B, or SMARCD3/BAF60C. In muscle cells, the BAF complex also contains DPF3. Component of neural progenitors-specific chromatin remodeling complex (npBAF complex) composed of at least, ARID1A/BAF250A or ARID1B/BAF250B, SMARCD1/BAF60A, SMARCD3/BAF60C, SMARCA2/BRM/BAF190B, SMARCA4/BRG1/BAF190A, SMARCB1/BAF47, SMARCC1/BAF155, SMARCE1/BAF57, SMARCC2/BAF170, PHF10/BAF45A, ACTL6A/BAF53A and actin. Component of neuron-specific chromatin remodeling complex (nBAF complex) composed of at least, ARID1A/BAF250A or ARID1B/BAF250B, SMARCD1/BAF60A, SMARCD3/BAF60C, SMARCA2/BRM/BAF190B, SMARCA4/BRG1/BAF190A, SMARCB1/BAF47, SMARCC1/BAF155, SMARCE1/BAF57, SMARCC2/BAF170, DPF1/BAF45B, DPF3/BAF45C, ACTL6B/BAF53B and actin. Component of the SWI/SNF-B (PBAF) chromatin remodeling complex, at least composed of SMARCA4/BRG1, SMARCB1/BAF47/SNF5, ACTL6A/BAF53A or ACTL6B/BAF53B, SMARCE1/BAF57, SMARCD1/BAF60A, SMARCD2/BAF60B, perhaps SMARCD3/BAF60C, SMARCC1/BAF155, SMARCC2/BAF170, PBRM1/BAF180, ARID2/BAF200 and actin (ACTB). Component of SWI/SNF (GBAF) subcomplex, which includes at least BICRA or BICRAL (mutually exclusive), BRD9, SS18, SMARCA2/BRM, SMARCA4/BRG1/BAF190A, ACTL6A/BAF53, SMARCC1/BAF155, and SMARCD1/BAF60A. Specifically interacts with the VDR heterodimer complex. Interacts with ESR1, NR3C1, NR1H4, PGR, SMARCA4, SMARCC1 and SMARCC2. Interacts with DPF2. Interacts with DPF3a (isoform 2 of DPF3/BAF45C) and with HDGFL2 in a DPF3a-dependent manner. Interacts with FOS, FOSB isoform 1 and 2, FOSL1 and FOSL2. Expressed in all tissues tested, including brain, heart, kidney, liver, lung, muscle, pancreas and placenta.

The protein resides in the nucleus. Its function is as follows. Involved in transcriptional activation and repression of select genes by chromatin remodeling (alteration of DNA-nucleosome topology). Component of SWI/SNF chromatin remodeling complexes that carry out key enzymatic activities, changing chromatin structure by altering DNA-histone contacts within a nucleosome in an ATP-dependent manner. Belongs to the neural progenitors-specific chromatin remodeling complex (npBAF complex) and the neuron-specific chromatin remodeling complex (nBAF complex). During neural development a switch from a stem/progenitor to a postmitotic chromatin remodeling mechanism occurs as neurons exit the cell cycle and become committed to their adult state. The transition from proliferating neural stem/progenitor cells to postmitotic neurons requires a switch in subunit composition of the npBAF and nBAF complexes. As neural progenitors exit mitosis and differentiate into neurons, npBAF complexes which contain ACTL6A/BAF53A and PHF10/BAF45A, are exchanged for homologous alternative ACTL6B/BAF53B and DPF1/BAF45B or DPF3/BAF45C subunits in neuron-specific complexes (nBAF). The npBAF complex is essential for the self-renewal/proliferative capacity of the multipotent neural stem cells. The nBAF complex along with CREST plays a role regulating the activity of genes essential for dendrite growth. Has a strong influence on vitamin D-mediated transcriptional activity from an enhancer vitamin D receptor element (VDRE). May be a link between mammalian SWI-SNF-like chromatin remodeling complexes and the vitamin D receptor (VDR) heterodimer. Mediates critical interactions between nuclear receptors and the BRG1/SMARCA4 chromatin-remodeling complex for transactivation. Interacts with AKIRIN2. The sequence is that of SWI/SNF-related matrix-associated actin-dependent regulator of chromatin subfamily D member 1 from Homo sapiens (Human).